A 159-amino-acid chain; its full sequence is tRNA-specific adenosine deaminase (159 aa).

The region spanning 6–133 is the CMP/dCMP-type deaminase domain; it reads EEQTYFMQEA…ERLNHRVQVE (128 aa). Zn(2+) is bound at residue His57. Catalysis depends on Glu59, which acts as the Proton donor. Zn(2+) is bound by residues Cys87 and Cys90.

Belongs to the cytidine and deoxycytidylate deaminase family. Homodimer. Requires Zn(2+) as cofactor.

The enzyme catalyses adenosine(34) in tRNA + H2O + H(+) = inosine(34) in tRNA + NH4(+). In terms of biological role, catalyzes the deamination of adenosine to inosine at the wobble position 34 of tRNA(Arg2). This chain is tRNA-specific adenosine deaminase, found in Streptococcus pyogenes serotype M18 (strain MGAS8232).